A 900-amino-acid polypeptide reads, in one-letter code: Phospholipase DDHD1 (900 aa).

Disordered regions lie at residues 1-28 (MNYP…ELGS), 100-152 (LRYY…GGPA), and 202-233 (GARP…DEDR). S8 and S11 each carry phosphoserine. Residues 130–140 (SGGGGATGGSP) are compositionally biased toward gly residues. S537 is a catalytic residue. In terms of domain architecture, DDHD spans 611-886 (LKFKVENFFC…ALFLLTFMYK (276 aa)). 2 disordered regions span residues 706–725 (AKEP…PSPV) and 768–801 (SSTT…TQTL). Over residues 710 to 725 (TSVSENEGISTIPSPV) the composition is skewed to polar residues. Phosphoserine is present on S723. The span at 776–787 (TSKDSMEDEKKP) shows a compositional bias: basic and acidic residues. The segment covering 791–801 (PSATTVGTQTL) has biased composition (polar residues).

The protein belongs to the PA-PLA1 family. In terms of assembly, forms homooligomers and, to a much smaller extent, heterooligomers with DDHD2. As to expression, highly expressed in testis. Also expressed in brain, spleen and lung. Only expressed in cerebellum in fetal brain.

Its subcellular location is the cytoplasm. It catalyses the reaction a 1,2-diacyl-sn-glycero-3-phosphate + H2O = a 2-acyl-sn-glycerol 3-phosphate + a fatty acid + H(+). It carries out the reaction a 1,2-diacyl-sn-glycero-3-phospho-(1D-myo-inositol) + H2O = a 2-acyl-sn-glycero-3-phospho-D-myo-inositol + a fatty acid + H(+). The enzyme catalyses 1-octadecanoyl-2-(5Z,8Z,11Z,14Z-eicosatetraenoyl)-sn-glycero-3-phospho-(1D-myo-inositol) + H2O = 2-(5Z,8Z,11Z,14Z-eicosatetraenoyl)-sn-glycero-3-phospho-(1D-myo-inositol) + octadecanoate + H(+). The catalysed reaction is a 1-acyl-2-(5Z,8Z,11Z,14Z-eicosatetraenoyl)-sn-glycero-3-phospho-(1D-myo-inositol) + H2O = 2-(5Z,8Z,11Z,14Z-eicosatetraenoyl)-sn-glycero-3-phospho-(1D-myo-inositol) + a fatty acid + H(+). It catalyses the reaction 1,2-dihexadecanoyl-sn-glycero-3-phospho-(1D-myo-inositol) + H2O = 2-hexadecanoyl-sn-glycero-3-phospho-(1D-myo-inositol) + hexadecanoate + H(+). It carries out the reaction a 1-acyl-2-(5Z,8Z,11Z,14Z)-eicosatetraenoyl-sn-glycero-3-phosphate + H2O = 2-(5Z,8Z,11Z,14Z-eicosatetraenoyl)-sn-glycero-3-phosphate + a fatty acid + H(+). The enzyme catalyses 1,2-di-(9Z-octadecenoyl)-sn-glycero-3-phosphate + H2O = 2-(9Z-octadecenoyl)-sn-glycero-3-phosphate + (9Z)-octadecenoate + H(+). The catalysed reaction is 1-hexadecanoyl-2-(9Z-octadecenoyl)-sn-glycero-3-phosphate + H2O = 2-(9Z-octadecenoyl)-sn-glycero-3-phosphate + hexadecanoate + H(+). It catalyses the reaction 1-hexadecanoyl-2-(9Z-octadecenoyl)-sn-glycero-3-phospho-L-serine + H2O = 2-(9Z-octadecenoyl)-sn-glycero-3-phospho-L-serine + hexadecanoate + H(+). It carries out the reaction 1,2-di-(5Z,8Z,11Z,14Z)-eicosatetraenoyl-sn-glycero-3-phosphate + H2O = 2-(5Z,8Z,11Z,14Z-eicosatetraenoyl)-sn-glycero-3-phosphate + (5Z,8Z,11Z,14Z)-eicosatetraenoate + H(+). The enzyme catalyses 1-octadecanoyl-2-(5Z,8Z,11Z,14Z-eicosatetraenoyl)-sn-glycero-3-phosphate + H2O = 2-(5Z,8Z,11Z,14Z-eicosatetraenoyl)-sn-glycero-3-phosphate + octadecanoate + H(+). The catalysed reaction is a 1,2-diacyl-sn-glycero-3-phosphocholine + H2O = a 2-acyl-sn-glycero-3-phosphocholine + a fatty acid + H(+). It catalyses the reaction a 1,2-diacyl-sn-glycero-3-phosphoethanolamine + H2O = a 2-acyl-sn-glycero-3-phosphoethanolamine + a fatty acid + H(+). It carries out the reaction a 1,2-diacyl-sn-glycero-3-phospho-L-serine + H2O = a 2-acyl-sn-glycero-3-phospho-L-serine + a fatty acid + H(+). The enzyme catalyses a 1,2-diacyl-sn-glycero-3-phospho-(1'-sn-glycerol) + H2O = 2-acyl-sn-glycero-3-phospho-(1'-sn-glycerol) + a fatty acid + H(+). The catalysed reaction is 1-hexadecanoyl-2-(9Z-octadecenoyl)-sn-glycero-3-phospho-(1'-sn-glycerol) + H2O = 2-(9Z-octadecenoyl)-sn-glycero-3-phospho-(1'-sn-glycerol) + hexadecanoate + H(+). It catalyses the reaction 1-acyl-2-(5Z,8Z,11Z,14Z-eicosatetraenoyl)-sn-glycero-3-phosphocholine + H2O = 2-(5Z,8Z,11Z,14Z)-eicosatetraenoyl-sn-glycero-3-phosphocholine + a fatty acid + H(+). It carries out the reaction 1-acyl-2-(5Z,8Z,11Z,14Z)-eicosatetraenoyl-sn-glycero-3-phosphoethanolamine + H2O = 2-(5Z,8Z,11Z,14Z)-eicosatetraenoyl-sn-glycero-3-phosphoethanolamine + a fatty acid + H(+). The enzyme catalyses 1-(9Z-octadecenoyl)-2-(7Z,10Z,13Z,16Z,19Z-docosapentaenoyl)-sn-glycero-3-phospho-1D-myo-inositol + H2O = 2-(7Z,10Z,13Z,16Z,19Z-docosapentaenoyl)-sn-glycero-3-phospho-1D-myo-inositol + (9Z)-octadecenoate + H(+). The catalysed reaction is 1-(9Z-octadecenoyl)-2-(5Z,8Z,11Z,14Z-eicosatetraenoyl)-sn-glycero-3-phospho-1D-myo-inositol + H2O = 2-(5Z,8Z,11Z,14Z-eicosatetraenoyl)-sn-glycero-3-phospho-(1D-myo-inositol) + (9Z)-octadecenoate + H(+). It catalyses the reaction 1,2-di-(9Z-octadecenoyl)-sn-glycero-3-phospho-1D-myo-inositol + H2O = 2-(9Z-octadecenoyl)-sn-glycero-3-phospho-1D-myo-inositol + (9Z)-octadecenoate + H(+). It carries out the reaction 1-(9Z-octadecenoyl)-2-(8Z,11Z,14Z-eicosatrienoyl)-sn-glycero-3-phospho-1D-myo-inositol + H2O = 2-(8Z,11Z,14Z-eicosatrienoyl)-sn-glycero-3-phospho-1D-myo-inositol + (9Z)-octadecenoate + H(+). The enzyme catalyses 1,2-di-(9Z-octadecenoyl)-sn-glycero-3-phosphocholine + H2O = (9Z-octadecenoyl)-sn-glycero-3-phosphocholine + (9Z)-octadecenoate + H(+). The protein operates within phospholipid metabolism; phosphatidylinositol metabolism. Its activity is regulated as follows. Phosphatidate (1,2-diacyl-sn-glycero-3-phosphate, PA) can positively regulate phospholipase A1 activity. Phospholipase A1 (PLA1) that hydrolyzes ester bonds at the sn-1 position of glycerophospholipids producing a free fatty acid and a lysophospholipid. Prefers phosphatidate (1,2-diacyl-sn-glycero-3-phosphate, PA) as substrate in vitro, but can efficiently hydrolyze phosphatidylinositol (1,2-diacyl-sn-glycero-3-phospho-(1D-myo-inositol), PI), as well as a range of other glycerophospholipid substrates such as phosphatidylcholine (1,2-diacyl-sn-glycero-3-phosphocholine, PC), phosphatidylethanolamine (1,2-diacyl-sn-glycero-3-phosphoethanolamine, PE), phosphatidylserine (1,2-diacyl-sn-glycero-3-phospho-L-serine, PS) and phosphatidylglycerol (1,2-diacyl-sn-glycero-3-phospho-(1'-sn-glycerol), PG). Involved in the regulation of the endogenous content of polyunsaturated PI and PS lipids in the nervous system. Changes in these lipids extend to downstream metabolic products like PI phosphates PIP and PIP2, which play fundamental roles in cell biology. Regulates mitochondrial morphology. These dynamic changes may be due to PA hydrolysis at the mitochondrial surface. May play a regulatory role in spermatogenesis or sperm function. This Homo sapiens (Human) protein is Phospholipase DDHD1.